Reading from the N-terminus, the 551-residue chain is MGGEGDSSQPQSGEGEAVAVNIRCSNGTKFSVKTSLDSTVESFKELVAQSSDVPANQQRLIYKGRILKDDQTLLSYGLQADHTIHMVRGSAPSSAPPPAPAASQTTAPSVTRGVGSDNSSNLGGASPGESLFPGLGFNPLGGGNAMSGLFGAGLPDLVQTQQQLAQNPNMIRDMMNTPAIQNLMNNPEFMRSMIMNNPQMRELVDRNPELGHVLNDPSILRQTLEAARNPELMREMMRNTDRAMSNIESMPEGFNMLRRMYENVQEPLMNATTMSGNAGNNTGSNPFAALLGNQGVTTQGSDASNNSSTPNAGTGTIPNANPLPNPWGATGGQTTAPGRTNVGGDARSPGLGGLGGLGSLGGLGGLGMLGADSPLGATPDASQLSQLLQNPAISQMMQSVFSNPQYMNQLMSLNPQLRSMLDSNPQLREMMQNPDFLRQFSSPEMMQQMMTLQQSLSQNRNTASQDAGQTGAATGNNGGLDLLMNMFGSLGAGGLSGTNQSNVPPEERYATQLQQLQEMGFYDRAENIRALLATNGNVNAAVERLLGSIGQ.

Residues 18-93 enclose the Ubiquitin-like domain; it reads VAVNIRCSNG…IHMVRGSAPS (76 aa). Positions 88–127 are disordered; the sequence is RGSAPSSAPPPAPAASQTTAPSVTRGVGSDNSSNLGGASP. STI1 domains are found at residues 143 to 184 and 197 to 236; these read GNAM…QNLM and NPQM…MREM. Positions 294–319 are enriched in polar residues; it reads QGVTTQGSDASNNSSTPNAGTGTIPN. Residues 294-336 form a disordered region; sequence QGVTTQGSDASNNSSTPNAGTGTIPNANPLPNPWGATGGQTTA. 2 STI1 domains span residues 373-410 and 414-449; these read SPLG…MNQL and NPQL…MQQM. The interval 455 to 475 is disordered; that stretch reads SLSQNRNTASQDAGQTGAATG. A compositionally biased stretch (low complexity) spans 465–475; sequence QDAGQTGAATG. Positions 504–548 constitute a UBA domain; sequence PPEERYATQLQQLQEMGFYDRAENIRALLATNGNVNAAVERLLGS.

In terms of assembly, interacts with 'Lys-48'-linked polyubiquitin chains via its UBA domain. Interacts with RPN10 via its ubiquitin-like domain. Interacts with PEX2 and PEX12. Ubiquitous.

The protein resides in the nucleus. It localises to the cytoplasm. Its function is as follows. Binds and presumably selects ubiquitin-conjugates for destruction. Prefers multiubiquitin chains rather than single ubiquitins, with a binding affinity for 'Lys-48'-linked ubiquitin chains. Acts as a ubiquitin receptor that associates with the 26S proteasomal docking subunit RPN10 for the indirect recognition of ubiquitinated substrates of ubiquitin/26S proteasome-mediated proteolysis (UPP). This is Ubiquitin domain-containing protein DSK2b (DSK2B) from Arabidopsis thaliana (Mouse-ear cress).